The chain runs to 323 residues: Ribose 1,5-bisphosphate isomerase (323 aa).

Residues 22–25 (RGAA) and R65 contribute to the substrate site. Residue C130 is the Proton acceptor of the active site. Residue D199 is the Proton donor of the active site. Residues 209-210 (NK) and K235 each bind substrate. K210 is covalently cross-linked (Glycyl lysine isopeptide (Lys-Gly) (interchain with G-Cter in SAMP2)).

Belongs to the eIF-2B alpha/beta/delta subunits family. R15P isomerase subfamily.

It carries out the reaction alpha-D-ribose 1,5-bisphosphate = D-ribulose 1,5-bisphosphate. In terms of biological role, catalyzes the isomerization of ribose 1,5-bisphosphate (R15P) to ribulose 1,5-bisphosphate (RuBP), the CO(2) acceptor and substrate for RubisCO. Functions in an archaeal AMP degradation pathway, together with AMP phosphorylase and RubisCO. This chain is Ribose 1,5-bisphosphate isomerase, found in Haloferax volcanii (strain ATCC 29605 / DSM 3757 / JCM 8879 / NBRC 14742 / NCIMB 2012 / VKM B-1768 / DS2) (Halobacterium volcanii).